Reading from the N-terminus, the 492-residue chain is N-succinylglutamate 5-semialdehyde dehydrogenase (492 aa).

220–225 contacts NAD(+); that stretch reads GSSTTG. Catalysis depends on residues Glu-243 and Cys-277.

It belongs to the aldehyde dehydrogenase family. AstD subfamily.

The enzyme catalyses N-succinyl-L-glutamate 5-semialdehyde + NAD(+) + H2O = N-succinyl-L-glutamate + NADH + 2 H(+). It functions in the pathway amino-acid degradation; L-arginine degradation via AST pathway; L-glutamate and succinate from L-arginine: step 4/5. Functionally, catalyzes the NAD-dependent reduction of succinylglutamate semialdehyde into succinylglutamate. The chain is N-succinylglutamate 5-semialdehyde dehydrogenase from Klebsiella pneumoniae subsp. pneumoniae (strain ATCC 700721 / MGH 78578).